Consider the following 329-residue polypeptide: Prostaglandin reductase 1 (329 aa).

Thr-18 is modified (phosphothreonine). NADP(+)-binding positions include 152-155 (GAVG), Lys-178, Tyr-193, Asn-217, 239-245 (CGAISQY), 270-272 (FIV), and Asn-321. Residue Lys-178 is modified to N6-(2-hydroxyisobutyryl)lysine; alternate. The residue at position 178 (Lys-178) is an N6-acetyllysine; alternate.

This sequence belongs to the NADP-dependent oxidoreductase L4BD family. In terms of assembly, monomer or homodimer.

It is found in the cytoplasm. The enzyme catalyses 13,14-dihydro-15-oxo-prostaglandin E1 + NADP(+) = 15-oxoprostaglandin E1 + NADPH + H(+). It catalyses the reaction 13,14-dihydro-15-oxo-prostaglandin E2 + NADP(+) = 15-oxoprostaglandin E2 + NADPH + H(+). The catalysed reaction is 13,14-dihydro-15-oxo-prostaglandin F1alpha + NADP(+) = 15-oxoprostaglandin F1alpha + NADPH + H(+). It carries out the reaction 13,14-dihydro-15-oxo-PGF2alpha + NADP(+) = 15-oxoprostaglandin F2alpha + NADPH + H(+). The enzyme catalyses leukotriene B4 + NADP(+) = 12-oxo-leukotriene B4 + NADPH + H(+). It catalyses the reaction 20-hydroxy-leukotriene B4 + NADP(+) = 12-oxo-20-hydroxy-leukotriene B4 + NADPH + H(+). The catalysed reaction is 6-trans-leukotriene B4 + NADP(+) = 12-oxo-(5S)-hydroxy-(6E,8E,10E,14Z)-eicosatetraenoate + NADPH + H(+). It carries out the reaction (5S,12S)-dihydroxy-(6E,10E,12E,14Z)-eicosatetraenoate + NADP(+) = 12-oxo-(5S)-hydroxy-(6E,8E,10E,14Z)-eicosatetraenoate + NADPH + H(+). The enzyme catalyses an n-alkanal + NADP(+) = an alk-2-enal + NADPH + H(+). It catalyses the reaction hexanal + NADP(+) = (E)-hex-2-enal + NADPH + H(+). The catalysed reaction is octanal + NADP(+) = (2E)-octenal + NADPH + H(+). It carries out the reaction decanal + NADP(+) = (2E)-decenal + NADPH + H(+). The enzyme catalyses dodecanal + NADP(+) = (2E)-dodecenal + NADPH + H(+). It catalyses the reaction 4-hydroxynonanal + NADP(+) = (E)-4-hydroxynon-2-enal + NADPH + H(+). The catalysed reaction is pentan-2-one + NADP(+) = (E)-pent-3-en-2-one + NADPH + H(+). It carries out the reaction nonan-2-one + NADP(+) = (3E)-nonen-2-one + NADPH + H(+). Functionally, NAD(P)H-dependent oxidoreductase involved in metabolic inactivation of pro- and anti-inflammatory eicosanoids: prostaglandins (PG), leukotrienes (LT) and lipoxins (LX). Catalyzes with high efficiency the reduction of the 13,14 double bond of 15-oxoPGs, including 15-oxo-PGE1, 15-oxo-PGE2, 15-oxo-PGF1-alpha and 15-oxo-PGF2-alpha. Catalyzes with lower efficiency the oxidation of the hydroxyl group at C12 of LTB4 and its derivatives, converting them into biologically less active 12-oxo-LTB4 metabolites. Reduces 15-oxo-LXA4 to 13,14 dihydro-15-oxo-LXA4, enhancing neutrophil recruitment at the inflammatory site. Plays a role in metabolic detoxification of alkenals and ketones. Reduces alpha,beta-unsaturated alkenals and ketones, particularly those with medium-chain length, showing highest affinity toward (2E)-decenal and (3E)-3-nonen-2-one. May inactivate 4-hydroxy-2-nonenal, a cytotoxic lipid constituent of oxidized low-density lipoprotein particles. The sequence is that of Prostaglandin reductase 1 (Ptgr1) from Mus musculus (Mouse).